We begin with the raw amino-acid sequence, 416 residues long: Splicing factor U2AF 50 kDa subunit (416 aa).

Basic and acidic residues predominate over residues 1–10 (MGYDDRERDR). Residues 1–47 (MGYDDRERDRERRRHRSRSRDRHRERSRDRRHHRNSRRKPSLYWDVP) are disordered. 2 stretches are compositionally biased toward basic residues: residues 11–21 (ERRRHRSRSRD) and 29–40 (DRRHHRNSRRKP). RRM domains lie at 93-175 (RRLY…RPHD), 207-285 (HKIF…RASV), and 318-408 (EVLC…YFDP).

It belongs to the splicing factor SR family. In terms of assembly, forms a heterodimer with the U2AF small subunit.

It is found in the nucleus. In terms of biological role, necessary for the splicing of pre-mRNA. Binds to the polypyrimidine tract of introns early during spliceosome assembly. This chain is Splicing factor U2AF 50 kDa subunit (U2af50), found in Drosophila melanogaster (Fruit fly).